The chain runs to 226 residues: Protein-L-isoaspartate O-methyltransferase (226 aa).

Residue Ser-66 is part of the active site.

Belongs to the methyltransferase superfamily. L-isoaspartyl/D-aspartyl protein methyltransferase family.

The protein localises to the cytoplasm. The enzyme catalyses [protein]-L-isoaspartate + S-adenosyl-L-methionine = [protein]-L-isoaspartate alpha-methyl ester + S-adenosyl-L-homocysteine. Functionally, catalyzes the methyl esterification of L-isoaspartyl residues in peptides and proteins that result from spontaneous decomposition of normal L-aspartyl and L-asparaginyl residues. It plays a role in the repair and/or degradation of damaged proteins. This Methanopyrus kandleri (strain AV19 / DSM 6324 / JCM 9639 / NBRC 100938) protein is Protein-L-isoaspartate O-methyltransferase.